The chain runs to 722 residues: Protein HAPLESS 2-A (722 aa).

Positions 1–24 (MPRRRGTPLPTILLLLAFVGGACG) are cleaved as a signal peptide. Topologically, residues 25–552 (TEILSKSRLE…LFDFGCHIQY (528 aa)) are extracellular. Intrachain disulfides connect C36–C48, C129–C159, C141–C188, C160–C315, C162–C171, C298–C322, and C435–C473. Residues 553 to 573 (VCIGWILLLLLIPAAVVFLWL) form a helical membrane-spanning segment. Over 574–722 (LHQEGLFDPL…HRDGHYSPSV (149 aa)) the chain is Cytoplasmic. The segment covering 598-641 (RRRHQKGRHHRHHHDHRHRHGHSHGDHHHHYHGGHHQRRRHHHP) has biased composition (basic residues). Disordered regions lie at residues 598–665 (RRRH…RNHH) and 680–722 (RLDR…SPSV). A compositionally biased stretch (basic and acidic residues) spans 646-662 (VEGHHHDRQQHSHEAGR). A compositionally biased stretch (basic residues) spans 701-711 (RRSRHERHGGH). The segment covering 712–722 (GHRDGHYSPSV) has biased composition (basic and acidic residues).

It belongs to the HAP2/GCS1 family.

The protein localises to the endoplasmic reticulum membrane. It is found in the cell membrane. In terms of biological role, required for male fertility. Plays a role in pollen tube guidance and successful gamete attachment. Essential for the fusion of gametes during double fertilization, where one male gamete fuses with the egg to produce a zygote, and another male gamete fuses with the central cell to produce the endosperm. Mediates the fusion of cell membranes. Not required for pollen tube outgrowth. In Oryza sativa subsp. japonica (Rice), this protein is Protein HAPLESS 2-A (HAP2A).